Reading from the N-terminus, the 1276-residue chain is Sterol regulatory element-binding protein cleavage-activating protein (1276 aa).

The Cytoplasmic segment spans residues 1–18 (MTLTERLREKISQAFYNH). Residues 19–39 (GLLCASYPIPIILFTGLCILA) form a helical membrane-spanning segment. The Lumenal segment spans residues 40–279 (CCYPLLKLPL…NLVHVHFKEE (240 aa)). The segment at 46–284 (KLPLPGTGPV…HFKEEIGIAE (239 aa)) is loop-1. The interval 60 to 81 (PVKDYSPPPVDSDHKQGEPSEQ) is disordered. A glycan (N-linked (GlcNAc...) asparagine) is linked at Asn-263. Residues 280–300 (IGIAELIPLVTTYIILFAYIY) traverse the membrane as a helical segment. One can recognise an SSD domain in the interval 284-442 (ELIPLVTTYI…MFFFTTVLSI (159 aa)). Residues 301–312 (FSTRKIDMVKSK) are Cytoplasmic-facing. The chain crosses the membrane as a helical span at residues 313–333 (WGLALAAVVTVLSSLLMSVGL). The Lumenal portion of the chain corresponds to 334–344 (CTLFGLTPTLN). The helical transmembrane segment at 345–365 (GGEIFPYLVVVIGLENVLVLT) threads the bilayer. The Cytoplasmic portion of the chain corresponds to 366-401 (KSVVSTPVDLEVKLRIAQGLSSESWSIMKNVATELG). A helical transmembrane segment spans residues 402–422 (IILIGYFTLVPAIQEFCLFAV). Residue Val-423 is a topological domain, lumenal. Residues 424-444 (GLVSDFFLQMFFFTTVLSIDI) traverse the membrane as a helical segment. Residues 445-518 (RRMELADLNK…FLARTRLAQR (74 aa)) lie on the Cytoplasmic side of the membrane. The short motif at 447-452 (MELADL) is the ER export signal element. Residues Lys-454 and Lys-466 each participate in a glycyl lysine isopeptide (Lys-Gly) (interchain with G-Cter in ubiquitin) cross-link. The helical transmembrane segment at 519–539 (LIMAGTVVWIGILVYTDPAGL) threads the bilayer. A loop-7 region spans residues 535–710 (DPAGLRTYLA…QAHGDITLYK (176 aa)). Over 540 to 708 (RTYLAAQVTE…GTQAHGDITL (169 aa)) the chain is Lumenal. N-linked (GlcNAc...) asparagine glycosylation is found at Asn-590 and Asn-641. A helical transmembrane segment spans residues 709 to 729 (YKVAALGLAAGIVLVLLLLCL). The Cytoplasmic segment spans residues 730-1276 (YRVLCPRNYG…YVPSVLEKLD (547 aa)). Positions 731-1276 (RVLCPRNYGQ…YVPSVLEKLD (546 aa)) are interaction with SREBF2. A WD 1 repeat occupies 771–811 (VLRGHLMDIECLASDGMLLVSCCLAGQVCVWDAQTGDCLTR). A disordered region spans residues 816 to 903 (GSRRDSCGGG…RHRAGCGRAR (88 aa)). Phosphoserine occurs at positions 821, 837, 843, 850, 905, and 934. The tract at residues 928–957 (PALRPPSPGSPLPQASQEDGAAPEKGSPPL) is disordered. WD repeat units lie at residues 949 to 999 (APEK…LCCS) and 1002 to 1039 (EVSS…SLSP). At Arg-1048 the chain carries Omega-N-methylarginine. 4 WD repeats span residues 1074–1111 (AHQK…CLFT), 1114–1152 (GHSG…RVSH), 1155–1192 (AHRG…KLYS), and 1194–1232 (QQDL…LLQT).

The protein belongs to the WD repeat SCAP family. In terms of assembly, membrane region forms a homotetramer. Component of the SCAP-SREBP complex (composed of SCAP and SREBF1/SREBP1 or SREBF2/SREBP2); interacts with SREBF1/SREBP1 or SREBF2/SREBP2 through its C-terminal cytoplasmic domain. Forms a ternary complex with INSIG1 or INSIG2 through its transmembrane domains at high sterol concentrations. Interacts with PAQR3; the interaction anchors the SCAP-SREBP complex to the Golgi apparatus in low cholesterol conditions. Interacts with the SEC23-SEC24 complex in a SAR1-GTP-dependent manner through an ER export signal in its third cytoplasmic loop. Interacts with RNF139; the interaction inhibits the interaction of SCAP with SEC24B and hampering the ER to Golgi transport of the SCAP-SREBP complex. Interacts with SPRING. Post-translationally, ubiquitinated at Lys-454 and Lys-466. RNF145 triggers ubiquitination of SCAP, likely inhibiting SCAP-SREBP complex transport to the Golgi apparatus and the subsequent processing/maturation of SREBF2/SREBP2.

The protein resides in the endoplasmic reticulum membrane. The protein localises to the golgi apparatus membrane. It localises to the cytoplasmic vesicle. Its subcellular location is the COPII-coated vesicle membrane. Its function is as follows. Escort protein required for cholesterol as well as lipid homeostasis. Regulates export of the SCAP-SREBP complex from the endoplasmic reticulum to the Golgi upon low cholesterol, thereby regulating the processing of sterol regulatory element-binding proteins (SREBPs) SREBF1/SREBP1 and SREBF2/SREBP2. At high sterol concentrations, formation of a ternary complex with INSIG (INSIG1 or INSIG2) leads to mask the ER export signal in SCAP, promoting retention of the complex in the endoplasmic reticulum. Low sterol concentrations trigger release of INSIG, a conformational change in the SSD domain of SCAP, unmasking of the ER export signal, promoting recruitment into COPII-coated vesicles and transport of the SCAP-SREBP to the Golgi: in the Golgi, SREBPs are then processed, releasing the transcription factor fragment of SREBPs from the membrane, its import into the nucleus and up-regulation of LDLR, INSIG1 and the mevalonate pathway. Binds cholesterol via its SSD domain. This chain is Sterol regulatory element-binding protein cleavage-activating protein, found in Cricetulus griseus (Chinese hamster).